We begin with the raw amino-acid sequence, 99 residues long: UPF0473 protein LEUM_0559 (99 aa).

Belongs to the UPF0473 family.

In Leuconostoc mesenteroides subsp. mesenteroides (strain ATCC 8293 / DSM 20343 / BCRC 11652 / CCM 1803 / JCM 6124 / NCDO 523 / NBRC 100496 / NCIMB 8023 / NCTC 12954 / NRRL B-1118 / 37Y), this protein is UPF0473 protein LEUM_0559.